The sequence spans 220 residues: MKFEKYIDHTLLKPESTRTQIDQIIDEAKAYNFKSVCVNPTHVKYAAERLADSEVLVCTVIGFPLGASTTATKVFETEDAIQNGADEIDMVINIGALKDGRFDDVQQDIEAVVKAAEGHTVKVIIETVLLDHDEIVKASELTKAAGADFVKTSTGFAGGGATAEDVKLMKDTVGADVEVKASGGVRNLEDFNKMVEAGATRIGASAGVQIMQGLEADSDY.

D89 acts as the Proton donor/acceptor in catalysis. The active-site Schiff-base intermediate with acetaldehyde is the K151. Catalysis depends on K180, which acts as the Proton donor/acceptor.

The protein belongs to the DeoC/FbaB aldolase family. DeoC type 1 subfamily.

The protein resides in the cytoplasm. It carries out the reaction 2-deoxy-D-ribose 5-phosphate = D-glyceraldehyde 3-phosphate + acetaldehyde. Its pathway is carbohydrate degradation; 2-deoxy-D-ribose 1-phosphate degradation; D-glyceraldehyde 3-phosphate and acetaldehyde from 2-deoxy-alpha-D-ribose 1-phosphate: step 2/2. In terms of biological role, catalyzes a reversible aldol reaction between acetaldehyde and D-glyceraldehyde 3-phosphate to generate 2-deoxy-D-ribose 5-phosphate. The sequence is that of Deoxyribose-phosphate aldolase 1 from Staphylococcus aureus (strain MRSA252).